Here is a 228-residue protein sequence, read N- to C-terminus: uncharacterized protein (228 aa).

Residues 1–15 (MKQKYLFIASMALAG) form the signal peptide. Residue Cys-16 is the site of N-palmitoyl cysteine attachment. Cys-16 carries the S-diacylglycerol cysteine lipid modification.

To P.multocida PM0015.

It is found in the cell membrane. This is an uncharacterized protein from Pasteurella multocida (strain Pm70).